The chain runs to 337 residues: Undecaprenyl-phosphate 4-deoxy-4-formamido-L-arabinose transferase (337 aa).

2 helical membrane passes run 235–255 and 270–290; these read LSII…LLII and FVLF…MGLL.

Belongs to the glycosyltransferase 2 family.

It is found in the cell inner membrane. The catalysed reaction is UDP-4-deoxy-4-formamido-beta-L-arabinose + di-trans,octa-cis-undecaprenyl phosphate = 4-deoxy-4-formamido-alpha-L-arabinopyranosyl di-trans,octa-cis-undecaprenyl phosphate + UDP. Its pathway is glycolipid biosynthesis; 4-amino-4-deoxy-alpha-L-arabinose undecaprenyl phosphate biosynthesis; 4-amino-4-deoxy-alpha-L-arabinose undecaprenyl phosphate from UDP-4-deoxy-4-formamido-beta-L-arabinose and undecaprenyl phosphate: step 1/2. The protein operates within bacterial outer membrane biogenesis; lipopolysaccharide biosynthesis. In terms of biological role, catalyzes the transfer of 4-deoxy-4-formamido-L-arabinose from UDP to undecaprenyl phosphate. The modified arabinose is attached to lipid A and is required for resistance to polymyxin and cationic antimicrobial peptides. This Pseudomonas savastanoi pv. phaseolicola (strain 1448A / Race 6) (Pseudomonas syringae pv. phaseolicola (strain 1448A / Race 6)) protein is Undecaprenyl-phosphate 4-deoxy-4-formamido-L-arabinose transferase.